The following is a 286-amino-acid chain: Bifunctional protein FolD (286 aa).

Residues 166–168 and I232 contribute to the NADP(+) site; that span reads GAS.

This sequence belongs to the tetrahydrofolate dehydrogenase/cyclohydrolase family. Homodimer.

It carries out the reaction (6R)-5,10-methylene-5,6,7,8-tetrahydrofolate + NADP(+) = (6R)-5,10-methenyltetrahydrofolate + NADPH. The catalysed reaction is (6R)-5,10-methenyltetrahydrofolate + H2O = (6R)-10-formyltetrahydrofolate + H(+). The protein operates within one-carbon metabolism; tetrahydrofolate interconversion. Its function is as follows. Catalyzes the oxidation of 5,10-methylenetetrahydrofolate to 5,10-methenyltetrahydrofolate and then the hydrolysis of 5,10-methenyltetrahydrofolate to 10-formyltetrahydrofolate. The chain is Bifunctional protein FolD from Vibrio parahaemolyticus serotype O3:K6 (strain RIMD 2210633).